A 312-amino-acid polypeptide reads, in one-letter code: Ribosomal protein uL3 glutamine methyltransferase (312 aa).

This sequence belongs to the protein N5-glutamine methyltransferase family. PrmB subfamily.

It catalyses the reaction L-glutaminyl-[ribosomal protein uL3] + S-adenosyl-L-methionine = N(5)-methyl-L-glutaminyl-[ribosomal protein uL3] + S-adenosyl-L-homocysteine + H(+). Methylates large ribosomal subunit protein uL3 on a specific glutamine residue. This is Ribosomal protein uL3 glutamine methyltransferase from Xylella fastidiosa (strain Temecula1 / ATCC 700964).